Here is a 162-residue protein sequence, read N- to C-terminus: Neuritin-like protein (162 aa).

A signal peptide spans 1–32 (MMCNCCHCHWRRRCQRLPCALTLLLLLPLAVA). Alanine 136 carries the GPI-anchor amidated alanine lipid modification. The propeptide at 137–162 (PALAPAPAPVLLAAALALACLLGPLA) is removed in mature form.

The protein belongs to the neuritin family.

The protein resides in the cell membrane. The chain is Neuritin-like protein (Nrn1l) from Mus musculus (Mouse).